We begin with the raw amino-acid sequence, 691 residues long: Elongation factor G (691 aa).

The region spanning 10 to 284 is the tr-type G domain; that stretch reads KRLRNIGIAA…AVVDYLPSPL (275 aa). Residues 19–26, 83–87, and 137–140 each bind GTP; these read AHIDAGKT, DTPGH, and NKMD.

It belongs to the TRAFAC class translation factor GTPase superfamily. Classic translation factor GTPase family. EF-G/EF-2 subfamily.

Its subcellular location is the cytoplasm. Catalyzes the GTP-dependent ribosomal translocation step during translation elongation. During this step, the ribosome changes from the pre-translocational (PRE) to the post-translocational (POST) state as the newly formed A-site-bound peptidyl-tRNA and P-site-bound deacylated tRNA move to the P and E sites, respectively. Catalyzes the coordinated movement of the two tRNA molecules, the mRNA and conformational changes in the ribosome. The protein is Elongation factor G (fusA) of Thermus thermophilus (strain ATCC 27634 / DSM 579 / HB8).